Reading from the N-terminus, the 267-residue chain is Energy-coupling factor transporter transmembrane protein EcfT (267 aa).

Helical transmembrane passes span Phe-30–Ala-50, Trp-67–Phe-87, Ala-110–Thr-130, Val-152–Met-172, and Ser-247–Leu-267.

It belongs to the energy-coupling factor EcfT family. Forms a stable energy-coupling factor (ECF) transporter complex composed of 2 membrane-embedded substrate-binding proteins (S component), 2 ATP-binding proteins (A component) and 2 transmembrane proteins (T component). May be able to interact with more than 1 S component at a time.

It is found in the cell membrane. Its function is as follows. Transmembrane (T) component of an energy-coupling factor (ECF) ABC-transporter complex. Unlike classic ABC transporters this ECF transporter provides the energy necessary to transport a number of different substrates. This Limosilactobacillus fermentum (strain CECT 5716 / Lc40) (Lactobacillus fermentum) protein is Energy-coupling factor transporter transmembrane protein EcfT.